The following is a 794-amino-acid chain: MASGASRYRLSCSLPGHELDVRGLVCCLYPPGAFVSVSRDRTTRLWAPDSPNRGFTEMHCMSGHSNFVSCVCIIPSSDIYPHGLIATGGNDHNICIFSLDSPMPLYILKGHKDTVCSLSSGKFGTLLSGSWDTTAKVWLNDKCMMTLQGHTAAVWAVKILPEQGLMLTGSADKTIKLWKAGRCERTFLGHEDCVRGLAILSETEFLSCANDASIRRWQITGECLEVYFGHTNYIYSISVFPNSKDFVTTAEDRSLRIWKHGECAQTIRLPAQSIWCCCVLENGDIVVGASDGIIRVFTESEERTASAEEIKAFERELSQATIDSKTGDLGDINAEQLPGREHLSEPGTREGQTRLIRDGERVEAYQWSVSDGRWIKIGDVVGSSGANQQTSGKVLYEGKEFDYVFSIDVNEGGPSYKLPYNVSDDPWLVAYNFLQKNDLNPMFLDQVAKFIIDNTKGQTLGLGNTSFSDPFTGGGRYVPGTSGPSNTVQTADPFTGAGRYMPGSAGMDTTMTGVDPFTGNSAYRSAASKTVNIYFPKKEALTFDQANPTQILGKLKELNGTAPEEKKLTEDDLVLLEKILSLICNNSSEKPTAQQLQILWKAINWPEDIVFPALDILRLSIKHPNVNENFCNEKGDQFSSHLINLLNPKGKPANQLLALRTFCNCFVSQAGQKLMMSQRESLMSHAIELKSGSNKNIHIALATLTLNYSVCFHKDHNIEGKAQCLSVISTILEVVQDLEATFRLLVALGTLISDDSNAIQLAKSLGVDSQIKKYVSVSEPAKVSECCRLVLHLL.

7 WD repeats span residues 17 to 56, 63 to 107, 110 to 148, 149 to 188, 190 to 227, 229 to 268, and 270 to 307; these read HELD…RGFT, GHSN…PLYI, GHKD…MTLQ, GHTA…RTFL, HEDC…LEVY, GHTN…QTIR, and PAQS…TASA. A Phosphoserine modification is found at S50. The 100-residue stretch at 366–465 folds into the PFU domain; sequence QWSVSDGRWI…KGQTLGLGNT (100 aa). N6-acetyllysine is present on K529. A PUL domain is found at 533 to 793; that stretch reads IYFPKKEALT…SECCRLVLHL (261 aa). 6 ARM repeats span residues 546–588, 589–620, 621–668, 669–714, 715–754, and 755–794; these read ANPT…NNSS, EKPT…LRLS, IKHP…CFVS, QAGQ…CFHK, DHNI…LISD, and DSNA…LHLL.

This sequence belongs to the WD repeat PLAP family. In terms of assembly, interacts with ubiquitin. Interacts with UBXN6, VCP and YOD1; may form a complex involved in macroautophagy. As to expression, expressed in the brain, with highest levels in hippocampal neurons, cerebellar granular cell layer and Purkinje cells.

It localises to the nucleus. The protein resides in the cytoplasm. Its subcellular location is the synapse. Plays a role in protein ubiquitination, sorting and degradation through its association with VCP. Involved in ubiquitin-mediated membrane proteins trafficking to late endosomes in an ESCRT-dependent manner, and hence plays a role in synaptic vesicle recycling. May play a role in macroautophagy, regulating for instance the clearance of damaged lysosomes. Plays a role in cerebellar Purkinje cell development. Positively regulates cytosolic and calcium-independent phospholipase A2 activities in a tumor necrosis factor alpha (TNF-alpha)- or lipopolysaccharide (LPS)-dependent manner, and hence prostaglandin E2 biosynthesis. The polypeptide is Phospholipase A-2-activating protein (Plaa) (Mus musculus (Mouse)).